The following is a 272-amino-acid chain: Dermonecrotic toxin LvSicTox-alphaIC1biv (272 aa).

Residue H5 is part of the active site. Mg(2+) contacts are provided by E25 and D27. The Nucleophile role is filled by H41. Intrachain disulfides connect C45-C51 and C47-C189. D84 contributes to the Mg(2+) binding site.

The protein belongs to the arthropod phospholipase D family. Class II subfamily. It depends on Mg(2+) as a cofactor. Expressed by the venom gland.

The protein resides in the secreted. It carries out the reaction an N-(acyl)-sphingosylphosphocholine = an N-(acyl)-sphingosyl-1,3-cyclic phosphate + choline. The catalysed reaction is an N-(acyl)-sphingosylphosphoethanolamine = an N-(acyl)-sphingosyl-1,3-cyclic phosphate + ethanolamine. The enzyme catalyses a 1-acyl-sn-glycero-3-phosphocholine = a 1-acyl-sn-glycero-2,3-cyclic phosphate + choline. It catalyses the reaction a 1-acyl-sn-glycero-3-phosphoethanolamine = a 1-acyl-sn-glycero-2,3-cyclic phosphate + ethanolamine. Dermonecrotic toxins cleave the phosphodiester linkage between the phosphate and headgroup of certain phospholipids (sphingolipid and lysolipid substrates), forming an alcohol (often choline) and a cyclic phosphate. This toxin acts on sphingomyelin (SM). It may also act on ceramide phosphoethanolamine (CPE), lysophosphatidylcholine (LPC) and lysophosphatidylethanolamine (LPE), but not on lysophosphatidylserine (LPS), and lysophosphatidylglycerol (LPG). It acts by transphosphatidylation, releasing exclusively cyclic phosphate products as second products. Induces dermonecrosis, hemolysis, increased vascular permeability, edema, inflammatory response, and platelet aggregation. The protein is Dermonecrotic toxin LvSicTox-alphaIC1biv of Loxosceles variegata (Recluse spider).